An 838-amino-acid chain; its full sequence is MHLEGRDGRRYPGAPAVELLQTSVPSGLAELVAGKRRLPRGAGGADPSHSCPRGAAGQSSWAPAGQEFASFLTKGRSHSSLPQMSSSRSKDSCFTENTPLLRNSLQEKGSRCIPVYHPEFITAEESWEDSSADWERRYLLSREVSGLSASASSEKGDLLDSPHIRLRLSKLRRCVQWLKVMGLFAFVVLCSILFSLYPDQGKLWQLLALSPLENYSVNLSSHVDSTLLQVDLAGALVASGPSRPGREEHIVVELTQADALGSRWRRPQQVTHNWTVYLNPRRSEHSVMSRTFEVLTRETVSISIRASLQQTQAVPLLMAHQYLRGSVETQVTIATAILAGVYALIIFEIVHRTLAAMLGSLAALAALAVIGDRPSLTHVVEWIDFETLALLFGMMILVAIFSETGFFDYCAVKAYRLSRGRVWAMIIMLCLIAAVLSAFLDNVTTMLLFTPVTIRLCEVLNLDPRQVLIAEVIFTNIGGAATAIGDPPNVIIVSNQELRKMGLDFAGFTAHMFIGICLVLLVCFPLLRLLYWNRKLYNKEPSEIVELKHEIHVWRLTAQRISPASREETAVRRLLLGKVLALEHLLARRLHTFHRQISQEDKNWETNIQELQKKHRISDGILLAKCLTVLGFVIFMFFLNSFVPGIHLDLGWIAILGAIWLLILADIHDFEIILHRVEWATLLFFAALFVLMEALAHLHLIEYVGEQTALLIKMVPEEQRLIAAIVLVVWVSALASSLIDNIPFTATMIPVLLNLSHDPEVGLPAPPLMYALAFGACLGGNGTLIGASANVVCAGIAEQHGYGFSFMEFFRLGFPMMVVSCTVGMCYLLVAHVVVGWN.

Over 1–179 (MHLEGRDGRR…KLRRCVQWLK (179 aa)) the chain is Cytoplasmic. Disordered regions lie at residues 38-60 (LPRGAGGADPSHSCPRGAAGQSS) and 74-94 (KGRSHSSLPQMSSSRSKDSCF). Residues 78–87 (HSSLPQMSSS) show a composition bias toward polar residues. The chain crosses the membrane as a helical span at residues 180–197 (VMGLFAFVVLCSILFSLY). At 198-330 (PDQGKLWQLL…QYLRGSVETQ (133 aa)) the chain is on the extracellular side. Residues Asn214, Asn218, and Asn273 are each glycosylated (N-linked (GlcNAc...) asparagine). A helical transmembrane segment spans residues 331 to 347 (VTIATAILAGVYALIIF). Topologically, residues 348-353 (EIVHRT) are cytoplasmic. The helical transmembrane segment at 354–370 (LAAMLGSLAALAALAVI) threads the bilayer. The Extracellular segment spans residues 371–384 (GDRPSLTHVVEWID). Residues 385 to 401 (FETLALLFGMMILVAIF) traverse the membrane as a helical segment. Residues 402-423 (SETGFFDYCAVKAYRLSRGRVW) are Cytoplasmic-facing. Residues 424-440 (AMIIMLCLIAAVLSAFL) form a helical membrane-spanning segment. Residues 441–513 (DNVTTMLLFT…DFAGFTAHMF (73 aa)) are Extracellular-facing. Asn442 carries N-linked (GlcNAc...) asparagine glycosylation. The chain crosses the membrane as a helical span at residues 514-530 (IGICLVLLVCFPLLRLL). Over 531–620 (YWNRKLYNKE…LQKKHRISDG (90 aa)) the chain is Cytoplasmic. A helical transmembrane segment spans residues 621 to 637 (ILLAKCLTVLGFVIFMF). Residues 638 to 647 (FLNSFVPGIH) lie on the Extracellular side of the membrane. The chain crosses the membrane as a helical span at residues 648 to 664 (LDLGWIAILGAIWLLIL). Residues 665–679 (ADIHDFEIILHRVEW) lie on the Cytoplasmic side of the membrane. The helical transmembrane segment at 680 to 696 (ATLLFFAALFVLMEALA) threads the bilayer. Topologically, residues 697–720 (HLHLIEYVGEQTALLIKMVPEEQR) are extracellular. The helical transmembrane segment at 721–737 (LIAAIVLVVWVSALASS) threads the bilayer. The Cytoplasmic segment spans residues 738 to 760 (LIDNIPFTATMIPVLLNLSHDPE). A helical transmembrane segment spans residues 761–777 (VGLPAPPLMYALAFGAC). Over 778–817 (LGGNGTLIGASANVVCAGIAEQHGYGFSFMEFFRLGFPMM) the chain is Extracellular. N-linked (GlcNAc...) asparagine glycosylation occurs at Asn781. Residues 818-834 (VVSCTVGMCYLLVAHVV) traverse the membrane as a helical segment. At 835–838 (VGWN) the chain is on the cytoplasmic side.

This sequence belongs to the CitM (TC 2.A.11) transporter family. As to expression, expressed in melanocytes and retinal pigment epithelium.

The protein localises to the melanosome membrane. It carries out the reaction chloride(in) = chloride(out). Functionally, contributes to a melanosome-specific anion (chloride) current that modulates melanosomal pH for optimal tyrosinase activity required for melanogenesis and the melanosome maturation. One of the components of the mammalian pigmentary system. May serve as a key control point at which ethnic skin color variation is determined. Major determinant of brown and/or blue eye color. Seems to regulate the post-translational processing of tyrosinase, which catalyzes the limiting reaction in melanin synthesis. The protein is P protein of Homo sapiens (Human).